Here is a 525-residue protein sequence, read N- to C-terminus: 2,3-bisphosphoglycerate-independent phosphoglycerate mutase (525 aa).

Positions 18 and 68 each coordinate Mn(2+). Residue Ser-68 is the Phosphoserine intermediate of the active site. Substrate is bound by residues His-129, 159-160, Arg-194, Arg-200, 269-272, and Lys-345; these read RD and RADR. 5 residues coordinate Mn(2+): Asp-413, His-417, Asp-454, His-455, and His-473.

It belongs to the BPG-independent phosphoglycerate mutase family. Monomer. The cofactor is Mn(2+).

It catalyses the reaction (2R)-2-phosphoglycerate = (2R)-3-phosphoglycerate. The protein operates within carbohydrate degradation; glycolysis; pyruvate from D-glyceraldehyde 3-phosphate: step 3/5. Catalyzes the interconversion of 2-phosphoglycerate and 3-phosphoglycerate. The protein is 2,3-bisphosphoglycerate-independent phosphoglycerate mutase of Chromohalobacter salexigens (strain ATCC BAA-138 / DSM 3043 / CIP 106854 / NCIMB 13768 / 1H11).